Consider the following 162-residue polypeptide: NADH-quinone oxidoreductase subunit C (162 aa).

It belongs to the complex I 30 kDa subunit family. As to quaternary structure, NDH-1 is composed of 14 different subunits. Subunits NuoB, C, D, E, F, and G constitute the peripheral sector of the complex.

It localises to the cell inner membrane. It carries out the reaction a quinone + NADH + 5 H(+)(in) = a quinol + NAD(+) + 4 H(+)(out). Its function is as follows. NDH-1 shuttles electrons from NADH, via FMN and iron-sulfur (Fe-S) centers, to quinones in the respiratory chain. The immediate electron acceptor for the enzyme in this species is believed to be ubiquinone. Couples the redox reaction to proton translocation (for every two electrons transferred, four hydrogen ions are translocated across the cytoplasmic membrane), and thus conserves the redox energy in a proton gradient. In Trichlorobacter lovleyi (strain ATCC BAA-1151 / DSM 17278 / SZ) (Geobacter lovleyi), this protein is NADH-quinone oxidoreductase subunit C.